A 378-amino-acid polypeptide reads, in one-letter code: tRNA-specific 2-thiouridylase MnmA (378 aa).

ATP contacts are provided by residues 12 to 19 (GLSGGVDS) and methionine 38. The tract at residues 98 to 100 (NPD) is interaction with target base in tRNA. Catalysis depends on cysteine 103, which acts as the Nucleophile. Cysteine 103 and cysteine 201 are disulfide-bonded. Glycine 127 serves as a coordination point for ATP. Residues 151-153 (KDQ) are interaction with tRNA. Cysteine 201 serves as the catalytic Cysteine persulfide intermediate. The tract at residues 319–320 (RY) is interaction with tRNA.

It belongs to the MnmA/TRMU family.

It is found in the cytoplasm. The catalysed reaction is S-sulfanyl-L-cysteinyl-[protein] + uridine(34) in tRNA + AH2 + ATP = 2-thiouridine(34) in tRNA + L-cysteinyl-[protein] + A + AMP + diphosphate + H(+). Catalyzes the 2-thiolation of uridine at the wobble position (U34) of tRNA, leading to the formation of s(2)U34. The protein is tRNA-specific 2-thiouridylase MnmA of Paracidovorax citrulli (strain AAC00-1) (Acidovorax citrulli).